Reading from the N-terminus, the 585-residue chain is Staphyloferrin A synthase (585 aa).

The protein belongs to the IucA/IucC family.

It catalyses the reaction N(5)-[(S)-citryl]-D-ornithine + citrate + ATP = staphyloferrin A + AMP + diphosphate + H(+). The protein operates within siderophore biosynthesis. In terms of biological role, involved in the biosynthesis of the siderophore staphyloferrin A. Catalyzes the ATP-dependent condensation of a citryl-D-ornithine intermediate, produced by SfnaD, and citrate to form staphyloferrin A. This chain is Staphyloferrin A synthase, found in Staphylococcus aureus (strain NCTC 8325 / PS 47).